The following is a 234-amino-acid chain: Lactate utilization protein C 1 (234 aa).

It belongs to the LutC/YkgG family.

Its function is as follows. Is involved in L-lactate degradation and allows cells to grow with lactate as the sole carbon source. This Bacillus mycoides (strain KBAB4) (Bacillus weihenstephanensis) protein is Lactate utilization protein C 1.